The following is a 310-amino-acid chain: RING-H2 finger protein ATL60 (310 aa).

Residues 24–44 (VLLFSIVSIFTGILFLLLLHL) form a helical membrane-spanning segment. The segment at 120-162 (CAVCLSDLVDGDKARVLPRCNHGFHVDCIDMWFQSHSTCPLCR) adopts an RING-type; atypical zinc-finger fold. Disordered regions lie at residues 170 to 201 (DTTH…QDQS) and 240 to 260 (GNFA…RSQE). Residues 179–201 (LPQNQNFESGHSTNQHNPSQDQS) show a composition bias toward polar residues.

It belongs to the RING-type zinc finger family. ATL subfamily.

The protein resides in the membrane. The catalysed reaction is S-ubiquitinyl-[E2 ubiquitin-conjugating enzyme]-L-cysteine + [acceptor protein]-L-lysine = [E2 ubiquitin-conjugating enzyme]-L-cysteine + N(6)-ubiquitinyl-[acceptor protein]-L-lysine.. The protein operates within protein modification; protein ubiquitination. The polypeptide is RING-H2 finger protein ATL60 (ATL60) (Arabidopsis thaliana (Mouse-ear cress)).